The following is a 485-amino-acid chain: Homospermidine synthase (485 aa).

It belongs to the saccharopine dehydrogenase family. It depends on NAD(+) as a cofactor.

It carries out the reaction 2 putrescine = sym-homospermidine + NH4(+). The enzyme catalyses putrescine + spermidine = sym-homospermidine + propane-1,3-diamine. In terms of biological role, involved in the NAD(+)-dependent synthesis of the polyamine homospermidine from putrescine. In Mesorhizobium japonicum (strain LMG 29417 / CECT 9101 / MAFF 303099) (Mesorhizobium loti (strain MAFF 303099)), this protein is Homospermidine synthase (hss).